A 625-amino-acid polypeptide reads, in one-letter code: MDYNIFEAVHEQQSSTSDMDLSEEDNNPFVGTHHLYASGIGTTIGEARPENENSPPSSSSLPSSPAHSSSAGSSRASTSSSTSSHAVVEADAETEPFVSLSMSTTATISKFTPHDMNGTQQIQIIDAGDFKDPWGKHAIGYVILYENNKIIRRYSEFHSLRQSLTRLLPTIIIPPIPSKHSLLKYIWSPINAANDSKIISTRKKMLNSFLSNCLNIQEISNDIVFQKFLNPEFNWKDVLSSSPIIILPLNNLLAPPLSPTKPSPLHSILPIPSNSSLRNYNSIWQQHITVKSHNEISNLPTEILQNESQFTHIENLFQNYKRIITHLLKNIRSNKSHFHSLSTYFAELGAYYNAFSLENDITMPNSLRESENNSNNPMMEIISHIEKTGHSFDVIYISSEILIEKYTSILEDPINELLQFLNESFKVLNFKKLKFLQFKILERLIIEKETKLSSLTEIENQLQKINESLTRSTILTDENYKDTKAADLTFVKKDVRSLSKSSSNSSSSGHQNEIHIGASKLNYKTSTPTMNLNKLEIKQLTEQERSKQIKQLNQDLSKLKDCLSICISDMLEINNSSYNSLMHTYNHINLTIGKILKLFAASFKAWIKECLKNWKLAKLQIDEAL.

A disordered region spans residues 1 to 90; the sequence is MDYNIFEAVH…STSSHAVVEA (90 aa). Positions 54–86 are enriched in low complexity; the sequence is SPPSSSSLPSSPAHSSSAGSSRASTSSSTSSHA. A PX domain is found at 98–235; it reads VSLSMSTTAT…QKFLNPEFNW (138 aa). Residues R153, S155, K179, and R202 each coordinate a 1,2-diacyl-sn-glycero-3-phospho-(1D-myo-inositol-3-phosphate). Coiled-coil stretches lie at residues 437 to 469 and 539 to 563; these read QFKILERLIIEKETKLSSLTEIENQLQKINESL and QLTEQERSKQIKQLNQDLSKLKDCL.

Belongs to the sorting nexin family. Binds to SNX4.

The protein resides in the prevacuolar compartment. It localises to the endosome. Its subcellular location is the endosome membrane. Involved in proper sorting of the v-SNARE protein SNC1. The polypeptide is Sorting nexin-41 (SNX41) (Saccharomyces cerevisiae (strain ATCC 204508 / S288c) (Baker's yeast)).